A 319-amino-acid polypeptide reads, in one-letter code: G-protein coupled receptor 171 (319 aa).

Residues 1 to 21 (MTNSSFFCPVYKDLEPFTYFF) lie on the Extracellular side of the membrane. A glycan (N-linked (GlcNAc...) asparagine) is linked at asparagine 3. The chain crosses the membrane as a helical span at residues 22–42 (YLVFLVGIIGSCFATWAFIQK). Residues 43 to 48 (NTNHRC) lie on the Cytoplasmic side of the membrane. Residues 49-69 (VSIYLINLLTADFLLTLALPV) form a helical membrane-spanning segment. At 70 to 89 (KIVVDLGVAPWKLKIFHCQV) the chain is on the extracellular side. The chain crosses the membrane as a helical span at residues 90–110 (TACLIYINMYLSIIFLAFVSI). Over 111–132 (DRCLQLTHSCKIYRIQEPGFAK) the chain is Cytoplasmic. The chain crosses the membrane as a helical span at residues 133–153 (MISTVVWLMVLLIMVPNMMIP). At 154 to 181 (IKDIKEKSNVGCMEFKKEFGRNWHLLTN) the chain is on the extracellular side. A helical transmembrane segment spans residues 182–202 (FICVAIFLNFSAIILISNCLV). The Cytoplasmic portion of the chain corresponds to 203–224 (IRQLYRNKDNENYPNVKKALIN). A helical transmembrane segment spans residues 225-245 (ILLVTTGYIICFVPYHIVRIP). At 246 to 268 (YTLSQTEVITDCSTRISLFKAKE) the chain is on the extracellular side. The chain crosses the membrane as a helical span at residues 269-289 (ATLLLAVSNLCFDPILYYHLS). Topologically, residues 290–319 (KAFRSKVTETFASPKETKAQKEKLRCENNA) are cytoplasmic.

Belongs to the G-protein coupled receptor 1 family. In terms of tissue distribution, expressed in both T-cell subsets and natural killer cells, while it is undetectable in B cells or CD14(+) monocytes. Expressed in peripheral blood mononuclear cells (PBMC) and Jurkat cells (at protein level).

The protein resides in the cell membrane. Functionally, G-protein coupled receptor for Big LEN, a 16-amino acid neuropeptide produced from the precursor protein, proSAAS (encoded by PCSK1N). Acts through a G(i)-alpha-mediated pathway in response to Big LEN. Big LEN-GPR171 system plays an important role in regulating feeding and metabolism. Also plays a role in modulating fear and anxiety-like behaviors in the basolateral amygdala. Big LEN-GPR171 modulates the mu-type opioid receptor signaling and antinociception. Acts as a negative regulator T cell function. The protein is G-protein coupled receptor 171 of Homo sapiens (Human).